A 590-amino-acid chain; its full sequence is Phenylalanine--tRNA ligase beta subunit (590 aa).

The B5 domain occupies 276–382 (MELDVWDVPV…IMYNYDRFEP (107 aa)). Residues N360, D366, E369, and D370 each contribute to the Mg(2+) site.

This sequence belongs to the phenylalanyl-tRNA synthetase beta subunit family. Type 2 subfamily. In terms of assembly, tetramer of two alpha and two beta subunits. The cofactor is Mg(2+).

The protein localises to the cytoplasm. It carries out the reaction tRNA(Phe) + L-phenylalanine + ATP = L-phenylalanyl-tRNA(Phe) + AMP + diphosphate + H(+). The chain is Phenylalanine--tRNA ligase beta subunit from Methanopyrus kandleri (strain AV19 / DSM 6324 / JCM 9639 / NBRC 100938).